The sequence spans 113 residues: Large ribosomal subunit protein uL22 (113 aa).

Belongs to the universal ribosomal protein uL22 family. In terms of assembly, part of the 50S ribosomal subunit.

Its function is as follows. This protein binds specifically to 23S rRNA; its binding is stimulated by other ribosomal proteins, e.g. L4, L17, and L20. It is important during the early stages of 50S assembly. It makes multiple contacts with different domains of the 23S rRNA in the assembled 50S subunit and ribosome. Functionally, the globular domain of the protein is located near the polypeptide exit tunnel on the outside of the subunit, while an extended beta-hairpin is found that lines the wall of the exit tunnel in the center of the 70S ribosome. This is Large ribosomal subunit protein uL22 from Geobacillus sp. (strain WCH70).